The chain runs to 252 residues: Thiamine thiazole synthase (252 aa).

Residues Ser35, 54-55, Gly62, Val126, and 152-154 contribute to the NAD(+) site; these read EK and HVD. Asp154 and His169 together coordinate Fe cation. Position 217 (Met217) interacts with NAD(+). Arg227 serves as a coordination point for glycine.

The protein belongs to the THI4 family. As to quaternary structure, homooctamer; tetramer of dimers. Fe(2+) is required as a cofactor.

The catalysed reaction is hydrogen sulfide + glycine + NAD(+) = ADP-5-ethyl-4-methylthiazole-2-carboxylate + nicotinamide + 3 H2O + H(+). It participates in cofactor biosynthesis; thiamine diphosphate biosynthesis. Its function is as follows. Involved in the biosynthesis of the thiazole moiety of thiamine. Catalyzes the conversion of NAD and glycine to adenosine diphosphate 5-(2-hydroxyethyl)-4-methylthiazole-2-carboxylate (ADT), an adenylated thiazole intermediate, using free sulfide as a source of sulfur. This is Thiamine thiazole synthase from Pyrococcus furiosus (strain ATCC 43587 / DSM 3638 / JCM 8422 / Vc1).